A 76-amino-acid polypeptide reads, in one-letter code: Beta-defensin 121 (76 aa).

The signal sequence occupies residues 1–15; sequence MKLLLLLLTVTLLLA. 3 disulfide bridges follow: Cys-23–Cys-50, Cys-30–Cys-44, and Cys-34–Cys-51.

The protein belongs to the beta-defensin family. Abundant expression in the male reproductive tract only.

It is found in the secreted. In terms of biological role, has antibacterial activity. In Macaca mulatta (Rhesus macaque), this protein is Beta-defensin 121 (DEFB121).